The following is a 129-amino-acid chain: ATP synthase epsilon chain (129 aa).

The protein belongs to the ATPase epsilon chain family. As to quaternary structure, F-type ATPases have 2 components, CF(1) - the catalytic core - and CF(0) - the membrane proton channel. CF(1) has five subunits: alpha(3), beta(3), gamma(1), delta(1), epsilon(1). CF(0) has three main subunits: a, b and c.

The protein resides in the cell inner membrane. In terms of biological role, produces ATP from ADP in the presence of a proton gradient across the membrane. This is ATP synthase epsilon chain from Campylobacter concisus (strain 13826).